Consider the following 276-residue polypeptide: Undecaprenyl-diphosphatase (276 aa).

The next 6 membrane-spanning stretches (helical) occupy residues 43–63 (RAMA…VWEF), 85–105 (LNLL…ADTI), 109–129 (LFNA…MLWA), 183–203 (AATE…AVYS), 218–238 (VFAI…RALL), and 254–274 (IAFG…WASA).

This sequence belongs to the UppP family.

The protein localises to the cell inner membrane. The enzyme catalyses di-trans,octa-cis-undecaprenyl diphosphate + H2O = di-trans,octa-cis-undecaprenyl phosphate + phosphate + H(+). In terms of biological role, catalyzes the dephosphorylation of undecaprenyl diphosphate (UPP). Confers resistance to bacitracin. This Pseudomonas syringae pv. tomato (strain ATCC BAA-871 / DC3000) protein is Undecaprenyl-diphosphatase.